Reading from the N-terminus, the 174-residue chain is Large ribosomal subunit protein uL10 (174 aa).

The protein belongs to the universal ribosomal protein uL10 family. Part of the ribosomal stalk of the 50S ribosomal subunit. The N-terminus interacts with L11 and the large rRNA to form the base of the stalk. The C-terminus forms an elongated spine to which L12 dimers bind in a sequential fashion forming a multimeric L10(L12)X complex.

In terms of biological role, forms part of the ribosomal stalk, playing a central role in the interaction of the ribosome with GTP-bound translation factors. The polypeptide is Large ribosomal subunit protein uL10 (Coxiella burnetii (strain CbuK_Q154) (Coxiella burnetii (strain Q154))).